A 71-amino-acid polypeptide reads, in one-letter code: ATP synthase F(0) complex subunit e, mitochondrial (71 aa).

The residue at position 34 (Lys34) is an N6-acetyllysine. Phosphoserine is present on Ser68.

This sequence belongs to the ATPase e subunit family. As to quaternary structure, component of the ATP synthase complex composed at least of ATP5F1A/subunit alpha, ATP5F1B/subunit beta, ATP5MC1/subunit c (homooctomer), MT-ATP6/subunit a, MT-ATP8/subunit 8, ATP5ME/subunit e, ATP5MF/subunit f, ATP5MG/subunit g, ATP5MK/subunit k, ATP5MJ/subunit j, ATP5F1C/subunit gamma, ATP5F1D/subunit delta, ATP5F1E/subunit epsilon, ATP5PF/subunit F6, ATP5PB/subunit b, ATP5PD/subunit d, ATP5PO/subunit OSCP. ATP synthase complex consists of a soluble F(1) head domain (subunits alpha(3) and beta(3)) - the catalytic core - and a membrane F(0) domain - the membrane proton channel (subunits c, a, 8, e, f, g, k and j). These two domains are linked by a central stalk (subunits gamma, delta, and epsilon) rotating inside the F1 region and a stationary peripheral stalk (subunits F6, b, d, and OSCP). Mammary gland, liver, kidney, heart, spleen, brain and lung.

It is found in the mitochondrion. The protein resides in the mitochondrion inner membrane. Functionally, subunit e, of the mitochondrial membrane ATP synthase complex (F(1)F(0) ATP synthase or Complex V) that produces ATP from ADP in the presence of a proton gradient across the membrane which is generated by electron transport complexes of the respiratory chain. ATP synthase complex consist of a soluble F(1) head domain - the catalytic core - and a membrane F(1) domain - the membrane proton channel. These two domains are linked by a central stalk rotating inside the F(1) region and a stationary peripheral stalk. During catalysis, ATP synthesis in the catalytic domain of F(1) is coupled via a rotary mechanism of the central stalk subunits to proton translocation. In vivo, can only synthesize ATP although its ATP hydrolase activity can be activated artificially in vitro. Part of the complex F(0) domain. This Mus musculus (Mouse) protein is ATP synthase F(0) complex subunit e, mitochondrial.